Consider the following 685-residue polypeptide: DNA ligase (685 aa).

NAD(+) contacts are provided by residues 47–51 (DSEYD), 96–97 (SL), and glutamate 125. Catalysis depends on lysine 127, which acts as the N6-AMP-lysine intermediate. NAD(+) contacts are provided by arginine 148, glutamate 185, lysine 304, and lysine 328. Positions 422, 425, 440, and 446 each coordinate Zn(2+). One can recognise a BRCT domain in the interval 605–685 (ADAQPLKGQT…ALLALFAANR (81 aa)).

Belongs to the NAD-dependent DNA ligase family. LigA subfamily. Mg(2+) serves as cofactor. The cofactor is Mn(2+).

The enzyme catalyses NAD(+) + (deoxyribonucleotide)n-3'-hydroxyl + 5'-phospho-(deoxyribonucleotide)m = (deoxyribonucleotide)n+m + AMP + beta-nicotinamide D-nucleotide.. In terms of biological role, DNA ligase that catalyzes the formation of phosphodiester linkages between 5'-phosphoryl and 3'-hydroxyl groups in double-stranded DNA using NAD as a coenzyme and as the energy source for the reaction. It is essential for DNA replication and repair of damaged DNA. This Shewanella sp. (strain W3-18-1) protein is DNA ligase.